Here is a 339-residue protein sequence, read N- to C-terminus: Glyceraldehyde-3-phosphate dehydrogenase (339 aa).

NAD(+) contacts are provided by residues 12–13 (RI), Asp39, Arg84, and Ser127. D-glyceraldehyde 3-phosphate contacts are provided by residues 157–159 (SCT), Thr188, Arg203, 216–217 (TG), and Arg239. The active-site Nucleophile is the Cys158. Asn320 is a binding site for NAD(+).

It belongs to the glyceraldehyde-3-phosphate dehydrogenase family. Homotetramer.

The protein localises to the cytoplasm. The enzyme catalyses D-glyceraldehyde 3-phosphate + phosphate + NAD(+) = (2R)-3-phospho-glyceroyl phosphate + NADH + H(+). The protein operates within carbohydrate degradation; glycolysis; pyruvate from D-glyceraldehyde 3-phosphate: step 1/5. Functionally, catalyzes the oxidative phosphorylation of glyceraldehyde 3-phosphate (G3P) to 1,3-bisphosphoglycerate (BPG) using the cofactor NAD. The first reaction step involves the formation of a hemiacetal intermediate between G3P and a cysteine residue, and this hemiacetal intermediate is then oxidized to a thioester, with concomitant reduction of NAD to NADH. The reduced NADH is then exchanged with the second NAD, and the thioester is attacked by a nucleophilic inorganic phosphate to produce BPG. The chain is Glyceraldehyde-3-phosphate dehydrogenase (gapA) from Mycobacterium avium.